Reading from the N-terminus, the 680-residue chain is MNFETSRCATLQYCPDPYIQRFIETPSHFSWKESYYRSAMSQSTQTSEFLSPEVFQHIWDFLEQPICSVQPIDLNFVDEPSENGATNKIEISMDCIRMQDSDLSDPMWPQYTNLGLLNGMDQQIQNGSSSTSPYNTDHAQNSVTAPSPYAQPSSTFDALSPSPAIPSNTDYPGPHSFDVSFQQSSTAKSATWTYSTELKKLYCQIAKTCPIQIKVMTPPPQGAVIRAMPVYKKAEHVTEVVKRCPNHELSREFNEGQIAPPSHLIRVEGNSHAQYVEDPITGRQSVLVPYEPPQVGTEFTTVLYNFMCNSSCVGGMNRRPILIIVTLETRDGQVLGRRCFEARICACPGRDRKADEDSIRKQQVSDSAKNGDGTKRPFRQNTHGIQMTSIKKRRSPDDELLYLPVRGRETYEMLLKIKESLELMQYLPQHTIETYRQQQQQQHQHLLQKQTSMQSQSSYGNSSPPLNKMNSMNKLPSVSQLINPQQRNALTPTTMPEGMGANIPMMGTHMPMAGDMNGLSPTQALPPPLSMPSTSHCTPPPPYPTDCSIVSFLARLGCSSCLDYFTTQGLTTIYQIEHYSMDDLASLKIPEQFRHAIWKGILDHRQLHDFSSPPHLLRTPSGASTVSVGSSETRGERVIDAVRFTLRQTISFPPRDEWNDFNFDMDSRRNKQQRIKEEGE.

Residues 1-107 (MNFETSRCAT…MQDSDLSDPM (107 aa)) are transcription activation. Positions 122-157 (QQIQNGSSSTSPYNTDHAQNSVTAPSPYAQPSSTFD) are enriched in polar residues. Residues 122–171 (QQIQNGSSSTSPYNTDHAQNSVTAPSPYAQPSSTFDALSPSPAIPSNTDY) are disordered. A DNA-binding region spans residues 170-362 (DYPGPHSFDV…KADEDSIRKQ (193 aa)). The Zn(2+) site is built by Cys244, His247, Cys308, and Cys312. Over residues 351-360 (DRKADEDSIR) the composition is skewed to basic and acidic residues. 2 disordered regions span residues 351–393 (DRKA…IKKR) and 436–472 (RQQQ…MNSM). Residues 352–388 (RKADEDSIRKQQVSDSAKNGDGTKRPFRQNTHGIQMT) form an interaction with HIPK2 region. The segment covering 379–389 (RQNTHGIQMTS) has biased composition (polar residues). The tract at residues 394–443 (RSPDDELLYLPVRGRETYEMLLKIKESLELMQYLPQHTIETYRQQQQQQH) is oligomerization. Positions 437-463 (QQQQQQHQHLLQKQTSMQSQSSYGNSS) are enriched in low complexity. The SAM domain occupies 541–607 (PPYPTDCSIV…WKGILDHRQL (67 aa)). Residues 610 to 680 (FSSPPHLLRT…KQQRIKEEGE (71 aa)) are transactivation inhibition. Lys676 participates in a covalent cross-link: Glycyl lysine isopeptide (Lys-Gly) (interchain with G-Cter in SUMO).

This sequence belongs to the p53 family. Binds DNA as a homotetramer. Isoform composition of the tetramer may determine transactivation activity. Interacts with HIPK2. Interacts with SSRP1, leading to stimulate coactivator activity. Interacts with WWP1. Interacts with PDS5A. Interacts (via activation domain) with NOC2L. Zn(2+) serves as cofactor. Post-translationally, may be sumoylated. In terms of processing, ubiquitinated. Polyubiquitination involves WWP1 and leads to proteasomal degradation of this protein. As to expression, widely expressed, notably in thymus, prostate, placenta, and skeletal muscle, although the precise isoform varies according to tissue type. Progenitor cell layers of skin, breast and prostate express high levels of DeltaN-type isoforms.

It localises to the nucleus. In terms of biological role, acts as a sequence specific DNA binding transcriptional activator or repressor. The isoforms contain a varying set of transactivation and auto-regulating transactivation inhibiting domains thus showing an isoform specific activity. May be required in conjunction with TP73/p73 for initiation of p53/TP53 dependent apoptosis in response to genotoxic insults and the presence of activated oncogenes. Involved in Notch signaling by probably inducing JAG1 and JAG2. Activates RIPK4 transcription. Plays a role in the regulation of epithelial morphogenesis. The ratio of DeltaN-type and TA*-type isoforms may govern the maintenance of epithelial stem cell compartments and regulate the initiation of epithelial stratification from the undifferentiated embryonal ectoderm. Required for limb formation from the apical ectodermal ridge. Activates transcription of the p21 promoter. In Rattus norvegicus (Rat), this protein is Tumor protein 63 (Tp63).